A 484-amino-acid chain; its full sequence is Xylulose kinase (484 aa).

77-78 is a binding site for substrate; it reads MH. Aspartate 233 functions as the Proton acceptor in the catalytic mechanism.

It belongs to the FGGY kinase family. Homodimer.

The catalysed reaction is D-xylulose + ATP = D-xylulose 5-phosphate + ADP + H(+). It carries out the reaction 1-deoxy-D-xylulose + ATP = 1-deoxy-D-xylulose 5-phosphate + ADP + H(+). With respect to regulation, sugar binding is accompanied by a dramatic hinge-bending movement that enhances interactions with Mg-ATP. Its function is as follows. Catalyzes the phosphorylation of D-xylulose to D-xylulose 5-phosphate. Also catalyzes the phosphorylation of 1-deoxy-D-xylulose to 1-deoxy-D-xylulose 5-phosphate, with lower efficiency. Can also use D-ribulose, xylitol and D-arabitol, but D-xylulose is preferred over the other substrates. Has a weak substrate-independent Mg-ATP-hydrolyzing activity. In Escherichia coli (strain K12), this protein is Xylulose kinase.